We begin with the raw amino-acid sequence, 211 residues long: Uracil phosphoribosyltransferase (211 aa).

5-phospho-alpha-D-ribose 1-diphosphate-binding positions include Arg-79, Arg-104, and 131–139 (DPMLATGGS). Uracil is bound by residues Ile-196 and 201-203 (GDA). Asp-202 provides a ligand contact to 5-phospho-alpha-D-ribose 1-diphosphate.

It belongs to the UPRTase family. Requires Mg(2+) as cofactor.

The catalysed reaction is UMP + diphosphate = 5-phospho-alpha-D-ribose 1-diphosphate + uracil. It functions in the pathway pyrimidine metabolism; UMP biosynthesis via salvage pathway; UMP from uracil: step 1/1. Its activity is regulated as follows. Allosterically activated by GTP. Functionally, catalyzes the conversion of uracil and 5-phospho-alpha-D-ribose 1-diphosphate (PRPP) to UMP and diphosphate. The polypeptide is Uracil phosphoribosyltransferase (Limosilactobacillus fermentum (strain NBRC 3956 / LMG 18251) (Lactobacillus fermentum)).